The chain runs to 120 residues: Large ribosomal subunit protein eL8 (120 aa).

This sequence belongs to the eukaryotic ribosomal protein eL8 family. Part of the 50S ribosomal subunit. Probably part of the RNase P complex.

The protein localises to the cytoplasm. In terms of biological role, multifunctional RNA-binding protein that recognizes the K-turn motif in ribosomal RNA, the RNA component of RNase P, box H/ACA, box C/D and box C'/D' sRNAs. The sequence is that of Large ribosomal subunit protein eL8 from Natronomonas pharaonis (strain ATCC 35678 / DSM 2160 / CIP 103997 / JCM 8858 / NBRC 14720 / NCIMB 2260 / Gabara) (Halobacterium pharaonis).